The chain runs to 513 residues: Histidine ammonia-lyase (513 aa).

The segment at residues 144-146 (ASG) is a cross-link (5-imidazolinone (Ala-Gly)). Ser145 is subject to 2,3-didehydroalanine (Ser).

The protein belongs to the PAL/histidase family. In terms of processing, contains an active site 4-methylidene-imidazol-5-one (MIO), which is formed autocatalytically by cyclization and dehydration of residues Ala-Ser-Gly.

The protein resides in the cytoplasm. It carries out the reaction L-histidine = trans-urocanate + NH4(+). It participates in amino-acid degradation; L-histidine degradation into L-glutamate; N-formimidoyl-L-glutamate from L-histidine: step 1/3. The protein is Histidine ammonia-lyase of Streptococcus pyogenes serotype M5 (strain Manfredo).